A 275-amino-acid chain; its full sequence is Uronate dehydrogenase (275 aa).

Residues 22–23 (GL), 42–44 (DIA), 60–61 (DL), and 80–84 (FGGVS) each bind NAD(+). Substrate-binding positions include S84 and 120–122 (SNH). Y145 functions as the Proton acceptor in the catalytic mechanism. Residue K149 participates in NAD(+) binding. S174 is a substrate binding site. S175 provides a ligand contact to NAD(+). R183 lines the substrate pocket.

It belongs to the NAD(P)-dependent epimerase/dehydratase family. Homohexamer.

The enzyme catalyses beta-D-galacturonate + NAD(+) = D-galactaro-1,5-lactone + NADH + H(+). It carries out the reaction beta-D-glucuronate + NAD(+) = D-glucaro-1,5-lactone + NADH + H(+). It functions in the pathway carbohydrate acid metabolism; D-galacturonate degradation via prokaryotic oxidative pathway. Catalyzes the oxidation of beta-D-galacturonate and beta-D-glucuronate to galactarate and D-glucarate, respectively. Cannot use NADP(+) instead of NAD(+) as cosubstrate. This is Uronate dehydrogenase (udh) from Pseudomonas syringae pv. tomato (strain ATCC BAA-871 / DC3000).